Here is a 45-residue protein sequence, read N- to C-terminus: Photosystem I reaction center subunit IX 1 (45 aa).

Residues 9–29 (WFRSAPVVATIWITLTAGIIV) form a helical membrane-spanning segment.

The protein belongs to the PsaJ family.

It localises to the cellular thylakoid membrane. May help in the organization of the PsaE and PsaF subunits. The protein is Photosystem I reaction center subunit IX 1 of Prochlorococcus marinus (strain NATL1A).